A 340-amino-acid chain; its full sequence is tRNA N6-adenosine threonylcarbamoyltransferase (340 aa).

Residues H111 and H115 each coordinate Fe cation. Residues I134–A138, D167, G180, and N273 contribute to the substrate site. D301 is a binding site for Fe cation.

Belongs to the KAE1 / TsaD family. It depends on Fe(2+) as a cofactor.

It localises to the cytoplasm. It catalyses the reaction L-threonylcarbamoyladenylate + adenosine(37) in tRNA = N(6)-L-threonylcarbamoyladenosine(37) in tRNA + AMP + H(+). In terms of biological role, required for the formation of a threonylcarbamoyl group on adenosine at position 37 (t(6)A37) in tRNAs that read codons beginning with adenine. Is involved in the transfer of the threonylcarbamoyl moiety of threonylcarbamoyl-AMP (TC-AMP) to the N6 group of A37, together with TsaE and TsaB. TsaD likely plays a direct catalytic role in this reaction. This Wigglesworthia glossinidia brevipalpis protein is tRNA N6-adenosine threonylcarbamoyltransferase.